The following is a 189-amino-acid chain: Cytidylate kinase (189 aa).

ATP is bound at residue Gly-7 to Ser-15.

It belongs to the cytidylate kinase family. Type 2 subfamily.

Its subcellular location is the cytoplasm. It catalyses the reaction CMP + ATP = CDP + ADP. The catalysed reaction is dCMP + ATP = dCDP + ADP. The sequence is that of Cytidylate kinase from Saccharolobus islandicus (strain L.S.2.15 / Lassen #1) (Sulfolobus islandicus).